The sequence spans 157 residues: Ribosome maturation factor RimP (157 aa).

Belongs to the RimP family.

It localises to the cytoplasm. Functionally, required for maturation of 30S ribosomal subunits. The sequence is that of Ribosome maturation factor RimP from Bacillus licheniformis (strain ATCC 14580 / DSM 13 / JCM 2505 / CCUG 7422 / NBRC 12200 / NCIMB 9375 / NCTC 10341 / NRRL NRS-1264 / Gibson 46).